The following is a 468-amino-acid chain: Argininosuccinate lyase (468 aa).

This sequence belongs to the lyase 1 family. Argininosuccinate lyase subfamily.

The protein resides in the cytoplasm. It catalyses the reaction 2-(N(omega)-L-arginino)succinate = fumarate + L-arginine. It participates in amino-acid biosynthesis; L-arginine biosynthesis; L-arginine from L-ornithine and carbamoyl phosphate: step 3/3. The protein is Argininosuccinate lyase of Paraburkholderia phymatum (strain DSM 17167 / CIP 108236 / LMG 21445 / STM815) (Burkholderia phymatum).